The primary structure comprises 369 residues: Histidinol-phosphate aminotransferase 3 (369 aa).

K220 carries the post-translational modification N6-(pyridoxal phosphate)lysine.

It belongs to the class-II pyridoxal-phosphate-dependent aminotransferase family. Histidinol-phosphate aminotransferase subfamily. Homodimer. Pyridoxal 5'-phosphate serves as cofactor.

It catalyses the reaction L-histidinol phosphate + 2-oxoglutarate = 3-(imidazol-4-yl)-2-oxopropyl phosphate + L-glutamate. Its pathway is amino-acid biosynthesis; L-histidine biosynthesis; L-histidine from 5-phospho-alpha-D-ribose 1-diphosphate: step 7/9. This chain is Histidinol-phosphate aminotransferase 3 (hisC3), found in Mesorhizobium japonicum (strain LMG 29417 / CECT 9101 / MAFF 303099) (Mesorhizobium loti (strain MAFF 303099)).